Consider the following 585-residue polypeptide: Arginine--tRNA ligase (585 aa).

A 'HIGH' region motif is present at residues 131-141 (ANPTGPMHVGH).

This sequence belongs to the class-I aminoacyl-tRNA synthetase family. In terms of assembly, monomer.

It is found in the cytoplasm. The enzyme catalyses tRNA(Arg) + L-arginine + ATP = L-arginyl-tRNA(Arg) + AMP + diphosphate. In Brucella ovis (strain ATCC 25840 / 63/290 / NCTC 10512), this protein is Arginine--tRNA ligase.